The primary structure comprises 346 residues: Sensor histidine kinase GraS (346 aa).

2 helical membrane passes run 15-35 (INWI…AYID) and 43-63 (VFYI…FTFV). In terms of domain architecture, Histidine kinase spans 126-332 (EFVHDIKTPV…TFYFIFPQQN (207 aa)). Position 129 is a phosphohistidine; by autocatalysis (H129).

In terms of processing, autophosphorylated.

The protein localises to the cell membrane. The catalysed reaction is ATP + protein L-histidine = ADP + protein N-phospho-L-histidine.. Functionally, member of the two-component regulatory system GraR/GraS involved in resistance against cationic antimicrobial peptides (CAMPs). GraS probably functions as a sensor protein kinase which is autophosphorylated at a histidine residue and transfers its phosphate group to GraR. The chain is Sensor histidine kinase GraS (graS) from Staphylococcus epidermidis (strain ATCC 35984 / DSM 28319 / BCRC 17069 / CCUG 31568 / BM 3577 / RP62A).